The sequence spans 419 residues: Gamma-glutamyl phosphate reductase (419 aa).

Belongs to the gamma-glutamyl phosphate reductase family.

It is found in the cytoplasm. It catalyses the reaction L-glutamate 5-semialdehyde + phosphate + NADP(+) = L-glutamyl 5-phosphate + NADPH + H(+). It functions in the pathway amino-acid biosynthesis; L-proline biosynthesis; L-glutamate 5-semialdehyde from L-glutamate: step 2/2. Its function is as follows. Catalyzes the NADPH-dependent reduction of L-glutamate 5-phosphate into L-glutamate 5-semialdehyde and phosphate. The product spontaneously undergoes cyclization to form 1-pyrroline-5-carboxylate. In Nitratidesulfovibrio vulgaris (strain DP4) (Desulfovibrio vulgaris), this protein is Gamma-glutamyl phosphate reductase.